A 208-amino-acid polypeptide reads, in one-letter code: Imidazoleglycerol-phosphate dehydratase (208 aa).

The tract at residues 1-22 is disordered; the sequence is MTEDTETSSTGAGADDRTAAIS.

Belongs to the imidazoleglycerol-phosphate dehydratase family.

It is found in the cytoplasm. It carries out the reaction D-erythro-1-(imidazol-4-yl)glycerol 3-phosphate = 3-(imidazol-4-yl)-2-oxopropyl phosphate + H2O. The protein operates within amino-acid biosynthesis; L-histidine biosynthesis; L-histidine from 5-phospho-alpha-D-ribose 1-diphosphate: step 6/9. The chain is Imidazoleglycerol-phosphate dehydratase from Haloquadratum walsbyi (strain DSM 16790 / HBSQ001).